Consider the following 269-residue polypeptide: GTP cyclohydrolase FolE2 (269 aa).

It belongs to the GTP cyclohydrolase IV family.

It carries out the reaction GTP + H2O = 7,8-dihydroneopterin 3'-triphosphate + formate + H(+). Its pathway is cofactor biosynthesis; 7,8-dihydroneopterin triphosphate biosynthesis; 7,8-dihydroneopterin triphosphate from GTP: step 1/1. In terms of biological role, converts GTP to 7,8-dihydroneopterin triphosphate. This Burkholderia ambifaria (strain ATCC BAA-244 / DSM 16087 / CCUG 44356 / LMG 19182 / AMMD) (Burkholderia cepacia (strain AMMD)) protein is GTP cyclohydrolase FolE2.